The sequence spans 395 residues: Envelope glycoprotein D (395 aa).

The first 17 residues, 1–17 (MGSGIAAVLLSLAVALA), serve as a signal peptide directing secretion. Over 18–342 (RVPAGEGEYV…PAPAPSGHTG (325 aa)) the chain is Virion surface. Histidine 63 lines the Zn(2+) pocket. 3 disulfides stabilise this stretch: cysteine 90–cysteine 214, cysteine 131–cysteine 227, and cysteine 143–cysteine 152. Asparagine 119 is a glycosylation site (N-linked (GlcNAc...) asparagine; by host). Aspartate 240 lines the Zn(2+) pocket. The profusion stretch occupies residues 261–306 (LQAAGWHGPKAPFTSTLLPPEVVETANVTRPELAPEERGTSRTPGD). Asparagine 287 carries an N-linked (GlcNAc...) asparagine; by host glycan. The tract at residues 289–314 (TRPELAPEERGTSRTPGDEPAPAVAA) is disordered. A helical membrane pass occupies residues 343 to 362 (AVVGALAGAGLAAGVVVLAV). The Intravirion segment spans residues 363-395 (YLVRRRGRAAGKHVRLPELLEEAHGPARRGAPY).

It belongs to the herpesviridae glycoprotein D family.

The protein localises to the virion membrane. Functionally, envelope glycoprotein that binds to host cell entry receptors, promoting the virus entry into host cells. May trigger fusion with host membrane, by recruiting the fusion machinery composed of gB and gH/gL. The sequence is that of Envelope glycoprotein D (gD) from Cercopithecine herpesvirus 1 (CeHV-1).